The primary structure comprises 84 residues: MNILSFIVYYNGEINRIYFNMGQKNSFPMKVSTIEFLNRLSNEPILEISNETTNILKLSINSLESNNNLIDLSKLTLNSIITLN.

This is an uncharacterized protein from Dictyostelium discoideum (Social amoeba).